Consider the following 97-residue polypeptide: DNA-directed RNA polymerase subunit omega (97 aa).

Positions 1–16 (MSTPNALAAFNSSPSL) are enriched in polar residues. The disordered stretch occupies residues 1–21 (MSTPNALAAFNSSPSLNAPEG).

It belongs to the RNA polymerase subunit omega family. The RNAP catalytic core consists of 2 alpha, 1 beta, 1 beta' and 1 omega subunit. When a sigma factor is associated with the core the holoenzyme is formed, which can initiate transcription.

It carries out the reaction RNA(n) + a ribonucleoside 5'-triphosphate = RNA(n+1) + diphosphate. Functionally, promotes RNA polymerase assembly. Latches the N- and C-terminal regions of the beta' subunit thereby facilitating its interaction with the beta and alpha subunits. This is DNA-directed RNA polymerase subunit omega from Saccharopolyspora erythraea (strain ATCC 11635 / DSM 40517 / JCM 4748 / NBRC 13426 / NCIMB 8594 / NRRL 2338).